A 473-amino-acid chain; its full sequence is ATP synthase subunit beta (473 aa).

158-165 (GGAGVGKT) contributes to the ATP binding site.

This sequence belongs to the ATPase alpha/beta chains family. In terms of assembly, F-type ATPases have 2 components, CF(1) - the catalytic core - and CF(0) - the membrane proton channel. CF(1) has five subunits: alpha(3), beta(3), gamma(1), delta(1), epsilon(1). CF(0) has three main subunits: a(1), b(2) and c(9-12). The alpha and beta chains form an alternating ring which encloses part of the gamma chain. CF(1) is attached to CF(0) by a central stalk formed by the gamma and epsilon chains, while a peripheral stalk is formed by the delta and b chains.

Its subcellular location is the cell membrane. It carries out the reaction ATP + H2O + 4 H(+)(in) = ADP + phosphate + 5 H(+)(out). Functionally, produces ATP from ADP in the presence of a proton gradient across the membrane. The catalytic sites are hosted primarily by the beta subunits. The polypeptide is ATP synthase subunit beta (Bacillus pumilus (strain SAFR-032)).